The chain runs to 876 residues: Phosphoenolpyruvate carboxylase (876 aa).

Catalysis depends on residues histidine 138 and lysine 543.

This sequence belongs to the PEPCase type 1 family. The cofactor is Mg(2+).

It carries out the reaction oxaloacetate + phosphate = phosphoenolpyruvate + hydrogencarbonate. In terms of biological role, forms oxaloacetate, a four-carbon dicarboxylic acid source for the tricarboxylic acid cycle. This is Phosphoenolpyruvate carboxylase from Pseudomonas fluorescens (strain Pf0-1).